Reading from the N-terminus, the 837-residue chain is MSLSHLYRDGEGHMDDDEDERENFEITDWDLQNEFNPNRQRHWQTKEEATYGVWAERDSDEERPSFGGKRARDYSAPVNFISAGLKKGAAEEAELEDSDDEEKPVKQDEFPKDFGPKKLKTGGNFKPSQKGFAGGTKSFMDFGSWERHTKGIGQKLLQKMGYVPGRGLGKNAQGIINPIEAKQRKGKGAVGAYGSERTTQSLQDFPVVDSEEEAEEEFQKELSQWRKDPSGSKKKPKYSYKTVEELKAKGRISKKLTAPQKELSQVKVIDMTGREQKVYYSYSQISHKHSVPDDGLPPQAQPPPPPGKEARAPGFALPELEHNLQLLIELTEQEIIRNDRQLQYERDVVVNLTHELEKASGALQQEQRAIASLSEVLALVEECERRLQPGCSDPLTLDECARVFQTLRDKYYEEYRMSDRVDLAVAIVYPLMKDYFKEWDPLKDCTYGTETISQWKSLLENDQLLSHGGQDLSADAFHRLIWEVWMPFVRSIVAQWQPRNCDPMVDFLDSWAPLIPVWVLDNILEQLIFPKLQKEVESWNPLTDTVPIHSWVHPWLPLMQARLEPLYSPIRSKLASALQKWHPSDSSAKLILQPWKDVFTPGSWEAFMVKNIVPKLGMCLGELVINPHQQHMDAFYWVIDWEGMVSVSSLVGLLEKHFFPKWLQVLCSWLSNSPNYEEITKWYLGWKSMFSDQVLAHPSVKDKFNEALDIMNRAVSSNVGAYMQPGAREHIAYLTHTERRKDFQYEAMQERREAENMAQRGIGVAASAVPMNFKDLIETKAEEHNIVFMPVIGKRHEGKQLYTFGRIVIYIDRGVVFVQGEKTWVPTSLQSLIDMAK.

The span at 1 to 13 (MSLSHLYRDGEGH) shows a compositional bias: basic and acidic residues. Disordered regions lie at residues 1–31 (MSLSHLYRDGEGHMDDDEDERENFEITDWDL), 54–73 (WAERDSDEERPSFGGKRARD), and 85–136 (LKKG…AGGT). Residues 1–50 (MSLSHLYRDGEGHMDDDEDERENFEITDWDLQNEFNPNRQRHWQTKEEAT) form a required for interaction with DHX15 region. Ser-2 carries the phosphoserine modification. The span at 14-28 (MDDDEDERENFEITD) shows a compositional bias: acidic residues. The segment covering 54–64 (WAERDSDEERP) has biased composition (basic and acidic residues). Phosphoserine is present on residues Ser-59 and Ser-98. The segment covering 91–102 (EEAELEDSDDEE) has biased composition (acidic residues). Residues 103–116 (KPVKQDEFPKDFGP) are compositionally biased toward basic and acidic residues. Phosphoserine is present on Ser-144. In terms of domain architecture, G-patch spans 149 to 195 (TKGIGQKLLQKMGYVPGRGLGKNAQGIINPIEAKQRKGKGAVGAYGS). Disordered regions lie at residues 183-236 (QRKG…KKKP) and 287-313 (HKHSVPDDGLPPQAQPPPPPGKEARAP). Residue Ser-210 is modified to Phosphoserine. Over residues 217-231 (EFQKELSQWRKDPSG) the composition is skewed to basic and acidic residues. The Nuclear localization signal motif lies at 700-705 (VKDKFN). Residues 710–734 (IMNRAVSSNVGAYMQPGAREHIAYL) are required for nuclear speckle localization.

It belongs to the TFP11/STIP family. As to quaternary structure, identified in the spliceosome C complex. Found in the Intron Large (IL) complex, a post-mRNA release spliceosomal complex containing the excised intron, U2, U5 and U6 snRNPs, and splicing factors. Interacts with TUFT1. Interacts with DHX15; indicative for a recruitment of DHX15 to the IL complex. Interacts with GCFC2.

The protein resides in the cytoplasm. It localises to the nucleus. In terms of biological role, involved in pre-mRNA splicing, specifically in spliceosome disassembly during late-stage splicing events. Intron turnover seems to proceed through reactions in two lariat-intron associated complexes termed Intron Large (IL) and Intron Small (IS). In cooperation with DHX15 seems to mediate the transition of the U2, U5 and U6 snRNP-containing IL complex to the snRNP-free IS complex leading to efficient debranching and turnover of excised introns. May play a role in the differentiation of ameloblasts and odontoblasts or in the forming of the enamel extracellular matrix. The polypeptide is Tuftelin-interacting protein 11 (TFIP11) (Bos taurus (Bovine)).